Consider the following 243-residue polypeptide: Pleckstrin homology domain-containing family B member 1 (243 aa).

A PH domain is found at 21–128 (ALVRGGWLWR…WKTALLEANS (108 aa)).

In terms of assembly, homodimer. Interacts (via PH domain) with MYO1C. Interacts (via PH domain) with MYO7A. Binds transducins. Highly expressed in retina and brain. Levels are very low or not detectable in all other tissues tested.

It is found in the membrane. Its subcellular location is the cytoplasm. This Homo sapiens (Human) protein is Pleckstrin homology domain-containing family B member 1 (PLEKHB1).